The chain runs to 321 residues: Ribosomal RNA small subunit methyltransferase H (321 aa).

Residues 40–42 (GGH), D60, F84, D106, and Q113 each bind S-adenosyl-L-methionine.

Belongs to the methyltransferase superfamily. RsmH family.

It localises to the cytoplasm. The catalysed reaction is cytidine(1402) in 16S rRNA + S-adenosyl-L-methionine = N(4)-methylcytidine(1402) in 16S rRNA + S-adenosyl-L-homocysteine + H(+). Its function is as follows. Specifically methylates the N4 position of cytidine in position 1402 (C1402) of 16S rRNA. The chain is Ribosomal RNA small subunit methyltransferase H from Haemophilus influenzae (strain ATCC 51907 / DSM 11121 / KW20 / Rd).